A 120-amino-acid chain; its full sequence is MLKFTESGLEGVKAELSWLDDLMESKGLIRAGQWDYERVTYDKKFSTIEGTFYLRIQGIAAEGDVGSGRAVIQLMSPLLGKHYYPHGVEYGETEEFPVQVVTKSKALIQDIANMLKTVQM.

This is an uncharacterized protein from Bacillus subtilis (strain 168).